Consider the following 263-residue polypeptide: UPF0739 protein C1orf74 homolog (263 aa).

The protein belongs to the UPF0739 family.

This chain is UPF0739 protein C1orf74 homolog, found in Rattus norvegicus (Rat).